Here is a 145-residue protein sequence, read N- to C-terminus: D-aminoacyl-tRNA deacylase (145 aa).

The Gly-cisPro motif, important for rejection of L-amino acids signature appears at 137–138; the sequence is GP.

This sequence belongs to the DTD family. As to quaternary structure, homodimer.

The protein localises to the cytoplasm. The catalysed reaction is glycyl-tRNA(Ala) + H2O = tRNA(Ala) + glycine + H(+). It carries out the reaction a D-aminoacyl-tRNA + H2O = a tRNA + a D-alpha-amino acid + H(+). An aminoacyl-tRNA editing enzyme that deacylates mischarged D-aminoacyl-tRNAs. Also deacylates mischarged glycyl-tRNA(Ala), protecting cells against glycine mischarging by AlaRS. Acts via tRNA-based rather than protein-based catalysis; rejects L-amino acids rather than detecting D-amino acids in the active site. By recycling D-aminoacyl-tRNA to D-amino acids and free tRNA molecules, this enzyme counteracts the toxicity associated with the formation of D-aminoacyl-tRNA entities in vivo and helps enforce protein L-homochirality. The sequence is that of D-aminoacyl-tRNA deacylase from Shewanella pealeana (strain ATCC 700345 / ANG-SQ1).